Here is a 647-residue protein sequence, read N- to C-terminus: Threonine--tRNA ligase (647 aa).

One can recognise a TGS domain in the interval M1–T63. The segment at D242 to P540 is catalytic. Residues C336, H387, and H517 each coordinate Zn(2+).

This sequence belongs to the class-II aminoacyl-tRNA synthetase family. In terms of assembly, homodimer. Zn(2+) serves as cofactor.

Its subcellular location is the cytoplasm. The enzyme catalyses tRNA(Thr) + L-threonine + ATP = L-threonyl-tRNA(Thr) + AMP + diphosphate + H(+). In terms of biological role, catalyzes the attachment of threonine to tRNA(Thr) in a two-step reaction: L-threonine is first activated by ATP to form Thr-AMP and then transferred to the acceptor end of tRNA(Thr). Also edits incorrectly charged L-seryl-tRNA(Thr). In Staphylococcus carnosus (strain TM300), this protein is Threonine--tRNA ligase.